Consider the following 100-residue polypeptide: MAKKNMIQREIKRSKLAKKYYLKRLAIKDQLKEAGSFSDKMDLRQNSKEMPRNSAAVRGRNRCWLTGRSRGYYRDFGLSRHVFREMSHECLLPGVTKSSW.

The protein belongs to the universal ribosomal protein uS14 family. Part of the 30S ribosomal subunit.

The protein resides in the plastid. Its subcellular location is the chloroplast. In terms of biological role, binds 16S rRNA, required for the assembly of 30S particles. The chain is Small ribosomal subunit protein uS14c from Pyropia yezoensis (Susabi-nori).